Reading from the N-terminus, the 452-residue chain is MLLTAYFVLVGLIALWAVLEFSACHSKPSTSSNAVGNPAFRQFQYDFYRTYFPALAADWLQGPYLYKLYQHYHFLEGQIAIIYVCGFGASVFAGLVSAPLTSRLGRRKSCILFCLLLSASYLCKLSQEYFVLITGRVLGGFSSSLLFSSFEAWYTHEHAEQHDFPAEWLPHTFTRAAAWNGGIAIAAGVIANACAEWLGLGPASPSVLAVPLLVLSVALVIREWDENYGQTSSFRRVCGDGLRCLLRDRRVLLLGTIQALFESVVYIFIFLWTPVLDPHNTPLGIAFSSFMAASAAGSSLYRLATSKKYHLQPMHVLCLSILMVFFSLFMLTFSTAPGQEHPTESLLAFLLIELACGLYFPAMGFLRCRLIPEKEQIGVLNWFRVPLNLLAGLGLLVLHDSDYQSGTRNMFSLCAITMLLALLCVVSLFTMVRNDSELRLPTSETEPNGTEQ.

Transmembrane regions (helical) follow at residues 1–21 (MLLTAYFVLVGLIALWAVLEF), 45–65 (YDFYRTYFPALAADWLQGPYL), 79–99 (IAIIYVCGFGASVFAGLVSAP), 130–150 (FVLITGRVLGGFSSSLLFSSF), 180–200 (NGGIAIAAGVIANACAEWLGL), 201–221 (GPASPSVLAVPLLVLSVALVI), 251–271 (VLLLGTIQALFESVVYIFIFL), 281–301 (TPLGIAFSSFMAASAAGSSLY), 316–336 (VLCLSILMVFFSLFMLTFSTA), 346–366 (LLAFLLIELACGLYFPAMGFL), 377–397 (IGVLNWFRVPLNLLAGLGLLV), and 410–430 (MFSLCAITMLLALLCVVSLFT).

This sequence belongs to the major facilitator superfamily.

It is found in the cell membrane. Mediates high-affinity intracellular uptake of the rare oligo-element molybdenum. The chain is Molybdate-anion transporter (mfsd5) from Xenopus tropicalis (Western clawed frog).